Consider the following 397-residue polypeptide: Elongation factor Tu (397 aa).

The region spanning 10–207 (KPHVNIGTIG…AVDESIPEPV (198 aa)) is the tr-type G domain. The interval 19 to 26 (GHVDHGKT) is G1. Residue 19-26 (GHVDHGKT) coordinates GTP. Thr26 lines the Mg(2+) pocket. The segment at 63–67 (GITIN) is G2. Positions 84–87 (DAPG) are G3. Residues 84–88 (DAPGH) and 139–142 (NKSD) contribute to the GTP site. The tract at residues 139 to 142 (NKSD) is G4. Positions 177-179 (SGL) are G5.

This sequence belongs to the TRAFAC class translation factor GTPase superfamily. Classic translation factor GTPase family. EF-Tu/EF-1A subfamily. In terms of assembly, monomer.

It localises to the cytoplasm. The catalysed reaction is GTP + H2O = GDP + phosphate + H(+). Functionally, GTP hydrolase that promotes the GTP-dependent binding of aminoacyl-tRNA to the A-site of ribosomes during protein biosynthesis. This is Elongation factor Tu from Clavibacter sepedonicus (Clavibacter michiganensis subsp. sepedonicus).